We begin with the raw amino-acid sequence, 58 residues long: Cecropin-B (58 aa).

A signal peptide spans 1 to 21 (ILSFVFACLLALSAVSAAPEP).

It belongs to the cecropin family.

Its subcellular location is the secreted. Cecropins have lytic and antibacterial activity against several Gram-positive and Gram-negative bacteria. The sequence is that of Cecropin-B (CECB) from Spodoptera litura (Asian cotton leafworm).